The following is a 189-amino-acid chain: Bilin-binding protein (189 aa).

An N-terminal signal peptide occupies residues 1 to 15; the sequence is MQYLIVLALVAAASA. Intrachain disulfides connect Cys-23/Cys-130 and Cys-57/Cys-185.

The protein belongs to the calycin superfamily. Lipocalin family. In terms of assembly, homotetramer. In terms of tissue distribution, hemolymph.

The protein resides in the secreted. Its function is as follows. This protein binds the blue pigments bilins. The polypeptide is Bilin-binding protein (Pieris brassicae (White butterfly)).